Reading from the N-terminus, the 573-residue chain is Probable D-xylulose kinase A (573 aa).

Histidine 97, arginine 168, aspartate 284, and asparagine 285 together coordinate substrate. ATP is bound by residues tryptophan 366, 471-472 (GG), and asparagine 475.

The protein belongs to the FGGY kinase family.

The protein resides in the cytoplasm. It catalyses the reaction D-xylulose + ATP = D-xylulose 5-phosphate + ADP + H(+). In terms of biological role, highly specific D-xylulose kinase which participates in the catabolism of xylose. Xylose is a major component of hemicelluloses such as xylan. Most fungi utilize D-xylose via three enzymatic reactions, xylose reductase (XR), xylitol dehydrogenase (XDH), and xylulokinase, to form xylulose 5-phosphate, which enters pentose phosphate pathway. In Neosartorya fischeri (strain ATCC 1020 / DSM 3700 / CBS 544.65 / FGSC A1164 / JCM 1740 / NRRL 181 / WB 181) (Aspergillus fischerianus), this protein is Probable D-xylulose kinase A (xkiA).